We begin with the raw amino-acid sequence, 126 residues long: Small ribosomal subunit protein bS6 (126 aa).

The segment at 99 to 126 (PLPAPRVVPGTEAPEPAQAAETPEPEAS) is disordered. The span at 107–120 (PGTEAPEPAQAAET) shows a compositional bias: low complexity.

Belongs to the bacterial ribosomal protein bS6 family.

In terms of biological role, binds together with bS18 to 16S ribosomal RNA. This is Small ribosomal subunit protein bS6 from Synechococcus sp. (strain CC9902).